A 312-amino-acid chain; its full sequence is Malate dehydrogenase (312 aa).

NAD(+) contacts are provided by residues 7 to 13 (GAAGGIG) and Asp-34. 2 residues coordinate substrate: Arg-81 and Arg-87. Residues Asn-94 and 117–119 (ITN) each bind NAD(+). Substrate-binding residues include Asn-119 and Arg-153. His-177 serves as the catalytic Proton acceptor. Met-227 provides a ligand contact to NAD(+).

This sequence belongs to the LDH/MDH superfamily. MDH type 1 family. Homodimer.

The enzyme catalyses (S)-malate + NAD(+) = oxaloacetate + NADH + H(+). Catalyzes the reversible oxidation of malate to oxaloacetate. The protein is Malate dehydrogenase of Serratia proteamaculans (strain 568).